Reading from the N-terminus, the 62-residue chain is MEWLGKYWWVLVLVFLLGVLLNVIKDLKRVDHKKFMDNRPELPPHRDFNDKWDDEDDWPKKK.

Residues 4–24 (LGKYWWVLVLVFLLGVLLNVI) form a helical membrane-spanning segment. Residues 36–51 (MDNRPELPPHRDFNDK) show a composition bias toward basic and acidic residues. Positions 36 to 62 (MDNRPELPPHRDFNDKWDDEDDWPKKK) are disordered. Acidic residues predominate over residues 52-62 (WDDEDDWPKKK).

This sequence belongs to the UPF0370 family.

The protein resides in the cell membrane. This Cronobacter sakazakii (strain ATCC BAA-894) (Enterobacter sakazakii) protein is UPF0370 protein ESA_00777.